The chain runs to 260 residues: Transcription repressor OFP13 (260 aa).

The OVATE domain maps to 150 to 211; it reads VAMESEDPYG…VSAFVDLLSG (62 aa).

In terms of tissue distribution, expressed in roots, rosette and cauline leaves, shoots, stems, flower buds and siliques.

The protein resides in the nucleus. Its function is as follows. Transcriptional repressor that regulates multiple aspects of plant growth and development through the regulation of BEL1-LIKE (BLH) and KNOX TALE (KNAT) homeodomain transcription factors. This chain is Transcription repressor OFP13 (OFP13), found in Arabidopsis thaliana (Mouse-ear cress).